Here is a 77-residue protein sequence, read N- to C-terminus: Small ribosomal subunit protein bS20 (77 aa).

Belongs to the bacterial ribosomal protein bS20 family.

Functionally, binds directly to 16S ribosomal RNA. This chain is Small ribosomal subunit protein bS20, found in Lactococcus lactis subsp. cremoris (strain MG1363).